Reading from the N-terminus, the 180-residue chain is Large ribosomal subunit protein uL10 (180 aa).

Belongs to the universal ribosomal protein uL10 family. In terms of assembly, part of the ribosomal stalk of the 50S ribosomal subunit. The N-terminus interacts with L11 and the large rRNA to form the base of the stalk. The C-terminus forms an elongated spine to which L12 dimers bind in a sequential fashion forming a multimeric L10(L12)X complex.

In terms of biological role, forms part of the ribosomal stalk, playing a central role in the interaction of the ribosome with GTP-bound translation factors. The polypeptide is Large ribosomal subunit protein uL10 (Thermosipho africanus (strain TCF52B)).